The primary structure comprises 501 residues: Cobyric acid synthase (501 aa).

Residues 252–443 enclose the GATase cobBQ-type domain; sequence DLDVAVIDLD…LHGIFDNPYW (192 aa). Cys333 (nucleophile) is an active-site residue. Residue His435 is part of the active site.

The protein belongs to the CobB/CobQ family. CobQ subfamily.

Its pathway is cofactor biosynthesis; adenosylcobalamin biosynthesis. Its function is as follows. Catalyzes amidations at positions B, D, E, and G on adenosylcobyrinic A,C-diamide. NH(2) groups are provided by glutamine, and one molecule of ATP is hydrogenolyzed for each amidation. The chain is Cobyric acid synthase from Limosilactobacillus reuteri (strain DSM 20016) (Lactobacillus reuteri).